Reading from the N-terminus, the 308-residue chain is Ribosomal RNA large subunit methyltransferase F (308 aa).

This sequence belongs to the methyltransferase superfamily. METTL16/RlmF family.

It localises to the cytoplasm. It carries out the reaction adenosine(1618) in 23S rRNA + S-adenosyl-L-methionine = N(6)-methyladenosine(1618) in 23S rRNA + S-adenosyl-L-homocysteine + H(+). In terms of biological role, specifically methylates the adenine in position 1618 of 23S rRNA. The polypeptide is Ribosomal RNA large subunit methyltransferase F (Escherichia coli O127:H6 (strain E2348/69 / EPEC)).